The chain runs to 313 residues: Porphobilinogen deaminase (313 aa).

An S-(dipyrrolylmethanemethyl)cysteine modification is found at cysteine 242.

Belongs to the HMBS family. Monomer. Dipyrromethane serves as cofactor.

The catalysed reaction is 4 porphobilinogen + H2O = hydroxymethylbilane + 4 NH4(+). It participates in porphyrin-containing compound metabolism; protoporphyrin-IX biosynthesis; coproporphyrinogen-III from 5-aminolevulinate: step 2/4. In terms of biological role, tetrapolymerization of the monopyrrole PBG into the hydroxymethylbilane pre-uroporphyrinogen in several discrete steps. This Shigella flexneri protein is Porphobilinogen deaminase.